Reading from the N-terminus, the 768-residue chain is ATP-dependent zinc metalloprotease FtsH (768 aa).

Over 1-33 the chain is Cytoplasmic; it reads MADRDKNDIRKRLEELRKDNNRRNNRQDNGNRS. The chain crosses the membrane as a helical span at residues 34–54; sequence PFSGFLFFIFVILLFTFTLLF. Over 55 to 139 the chain is Periplasmic; the sequence is HRDIQTYFQE…KLNSLQPSGG (85 aa). Residues 140–160 traverse the membrane as a helical segment; that stretch reads GFFLLLLGQFLPMIIMIGLMV. The Cytoplasmic segment spans residues 161–768; it reads YLAKKMVGGS…SNFKLPSFME (608 aa). 238–245 is a binding site for ATP; that stretch reads GRPGTGKT. His-461 lines the Zn(2+) pocket. Residue Glu-462 is part of the active site. 2 residues coordinate Zn(2+): His-465 and Asp-536. Positions 647 to 768 are disordered; it reads EESIQKGSEG…SNFKLPSFME (122 aa). The segment covering 669–698 has biased composition (basic and acidic residues); sequence QENKTVEAEVHDSNLKSDTEKLAEAVREIT. A compositionally biased stretch (acidic residues) spans 715-731; that stretch reads KDSDDNEKNDDDNENSD.

The protein in the central section; belongs to the AAA ATPase family. It in the C-terminal section; belongs to the peptidase M41 family. In terms of assembly, homohexamer. Zn(2+) is required as a cofactor.

The protein localises to the cell inner membrane. In terms of biological role, acts as a processive, ATP-dependent zinc metallopeptidase for both cytoplasmic and membrane proteins. Plays a role in the quality control of integral membrane proteins. This is ATP-dependent zinc metalloprotease FtsH from Leptotrichia buccalis (strain ATCC 14201 / DSM 1135 / JCM 12969 / NCTC 10249 / C-1013-b).